A 251-amino-acid chain; its full sequence is MFKVVICDDERIIRQGLKQMIPWKEYHFTTIYTATDGVEALSLIRQHQPELVITDIRMPRKNGVDLLDDIKDLDCQVIILSSYDDFEYMKAGIQHHVLDYLLKPVDHTQLEHILDILVQRLLERPHSTNDDAAYYTAFQPLLKIDYDDYYVNQILSQIKQHYHKKVTVLDLINPIVVSESYAMRTFKEHVGITIVDYLNRYRILKSLHLLDQHYKHYEIAEKVGFSEYKMFCYHFKKYLHMSPSDYNKLSK.

Residues Lys3–Val118 form the Response regulatory domain. Asp55 is modified (4-aspartylphosphate). One can recognise an HTH araC/xylS-type domain in the interval Asn152–Leu249. 2 DNA-binding regions (H-T-H motif) span residues Leu169–Val190 and His216–Leu239.

Phosphorylated by SE_0166.

It localises to the cytoplasm. In terms of biological role, probable member of the two-component regulatory system SE_0166/SE_0165. This is an uncharacterized protein from Staphylococcus epidermidis (strain ATCC 12228 / FDA PCI 1200).